A 34-amino-acid polypeptide reads, in one-letter code: Conotoxin de13a (34 aa).

A 4-hydroxyproline mark is found at Pro3 and Pro7. A 6'-bromotryptophan modification is found at Trp14. Lys18 carries the 5-hydroxylysine modification. A 4-hydroxyproline modification is found at Pro21. Lys25 is modified (5-hydroxylysine). His32 is subject to Histidine amide.

In terms of processing, contains 4 disulfide bonds. The diastereomeric form of 5-hydroxylysine found was not conclusively established, but it is probably 5R. Expressed by the venom duct.

It localises to the secreted. The chain is Conotoxin de13a from Conasprella delessertii (Sozon's cone).